The primary structure comprises 113 residues: MAKYQKLGRDSSARKALFRAVVTALFDKERIETTEAKAKAVQSIAEEMITLAKRGDLHARRQALAYIYDESVVTKLFNQIAPRYADRNGGYTRVIRTGVRKGDAAPMAILELV.

It belongs to the bacterial ribosomal protein bL17 family. In terms of assembly, part of the 50S ribosomal subunit. Contacts protein L32.

This Symbiobacterium thermophilum (strain DSM 24528 / JCM 14929 / IAM 14863 / T) protein is Large ribosomal subunit protein bL17.